We begin with the raw amino-acid sequence, 511 residues long: Glucans biosynthesis protein G (511 aa).

Positions 1 to 22 (MMKMRWLGAAIMLTLYASSSWA) are cleaved as a signal peptide.

Belongs to the OpgD/OpgG family.

Its subcellular location is the periplasm. Its pathway is glycan metabolism; osmoregulated periplasmic glucan (OPG) biosynthesis. Functionally, involved in the biosynthesis of osmoregulated periplasmic glucans (OPGs). The polypeptide is Glucans biosynthesis protein G (Salmonella paratyphi A (strain ATCC 9150 / SARB42)).